The sequence spans 297 residues: UBX domain-containing protein 1 (297 aa).

Residue Ala2 is modified to N-acetylalanine. Positions 2–42 (AELTALESLIEMGFPKGRAEKALALTGNQGIEAAMDWLMEH) constitute a UBA domain. Residues 40–210 (MEHEDDPDVD…PSREPPTKRE (171 aa)) are disordered. The interaction with BRCA1 stretch occupies residues 43–297 (EDDPDVDEPL…VLIVAKKCPG (255 aa)). 2 stretches are compositionally biased toward basic and acidic residues: residues 86-122 (LTEE…ERER) and 137-177 (RLQE…ERAK). The stretch at 86–176 (LTEEERQEQT…KIERDKAERA (91 aa)) forms a coiled coil. Residues 187 to 199 (PSPPATEPGPVPS) show a composition bias toward pro residues. Ser199 is subject to Phosphoserine. Ser200 is subject to Phosphoserine; by MAPK12. Residues Thr207 and Thr229 each carry the phosphothreonine modification. Residues 209–291 (REYDQCRIQV…GLVPSAVLIV (83 aa)) form the UBX domain. Ser270 carries the phosphoserine modification.

In terms of assembly, component of a complex required to couple retrotranslocation, ubiquitination and deglycosylation composed of NGLY1, SAKS1, AMFR, VCP and RAD23B. Interacts with HOMER2. Interacts directly with VCP. Interacts with BRCA1 and BARD1; interaction takes place when BRCA1 is not autoubiquitinated bur is strongly enhanced in the presence of autoubiquitinated BRCA1.

Its subcellular location is the cytoplasm. Its function is as follows. Ubiquitin-binding protein that interacts with the BRCA1-BARD1 heterodimer, and regulates its activity. Specifically binds 'Lys-6'-linked polyubiquitin chains. Interaction with autoubiquitinated BRCA1, leads to inhibit the E3 ubiquitin-protein ligase activity of the BRCA1-BARD1 heterodimer. Component of a complex required to couple deglycosylation and proteasome-mediated degradation of misfolded proteins in the endoplasmic reticulum that are retrotranslocated in the cytosol. This Bos taurus (Bovine) protein is UBX domain-containing protein 1 (UBXN1).